We begin with the raw amino-acid sequence, 152 residues long: SsrA-binding protein (152 aa).

It belongs to the SmpB family.

It is found in the cytoplasm. Required for rescue of stalled ribosomes mediated by trans-translation. Binds to transfer-messenger RNA (tmRNA), required for stable association of tmRNA with ribosomes. tmRNA and SmpB together mimic tRNA shape, replacing the anticodon stem-loop with SmpB. tmRNA is encoded by the ssrA gene; the 2 termini fold to resemble tRNA(Ala) and it encodes a 'tag peptide', a short internal open reading frame. During trans-translation Ala-aminoacylated tmRNA acts like a tRNA, entering the A-site of stalled ribosomes, displacing the stalled mRNA. The ribosome then switches to translate the ORF on the tmRNA; the nascent peptide is terminated with the 'tag peptide' encoded by the tmRNA and targeted for degradation. The ribosome is freed to recommence translation, which seems to be the essential function of trans-translation. This chain is SsrA-binding protein, found in Rickettsia massiliae (strain Mtu5).